The following is a 288-amino-acid chain: Inositol monophosphatase 2 (288 aa).

Positions 81, 101, 103, and 104 each coordinate Mg(2+). E81 serves as a coordination point for substrate. Substrate is bound by residues I103–T106, G205–S207, Q224, and D231. D231 provides a ligand contact to Mg(2+).

Belongs to the inositol monophosphatase superfamily. Homodimer. Mg(2+) serves as cofactor.

The protein resides in the cytoplasm. It carries out the reaction a myo-inositol phosphate + H2O = myo-inositol + phosphate. It catalyses the reaction 1D-myo-inositol 1-phosphate + H2O = myo-inositol + phosphate. The catalysed reaction is 1D-myo-inositol 2-phosphate + H2O = myo-inositol + phosphate. The enzyme catalyses 1D-myo-inositol 3-phosphate + H2O = myo-inositol + phosphate. It carries out the reaction 1D-myo-inositol 4-phosphate + H2O = myo-inositol + phosphate. It catalyses the reaction 1D-myo-inositol 5-phosphate + H2O = myo-inositol + phosphate. The catalysed reaction is 1D-myo-inositol 6-phosphate + H2O = myo-inositol + phosphate. The enzyme catalyses alpha-D-glucose 1-phosphate + H2O = D-glucose + phosphate. It carries out the reaction glycerol 2-phosphate + H2O = glycerol + phosphate. It catalyses the reaction adenosine 2'-phosphate + H2O = adenosine + phosphate. Its pathway is polyol metabolism; myo-inositol biosynthesis; myo-inositol from D-glucose 6-phosphate: step 2/2. Its activity is regulated as follows. Inhibited by high Li(+) and restricted Mg(2+) concentrations. Functionally, phosphatase that can use myo-inositol monophosphates, myo-inositol 1,4-diphosphate, scyllo-inositol-1,4-diphosphate, glucose-1-phosphate, beta-glycerophosphate and 2'-AMP as substrates in vitro. It is likely that IMPA2 has an as yet unidentified in vivo substrate(s). Has been implicated as the pharmacological target for lithium (Li(+)) action in brain. The protein is Inositol monophosphatase 2 of Homo sapiens (Human).